The chain runs to 108 residues: MYMSRMKKKQKNIIKDVASERIERLFKLAAEEYSSNPGRSDRYVHLARRIGMKYRIRFPSPLKRKMCRGCSSYLVPGSSSRVRLHGRYMTITCLKCGREMRIPYHLKE.

Cysteine 67, cysteine 70, cysteine 93, and cysteine 96 together coordinate Zn(2+).

This sequence belongs to the eukaryotic/archaeal RNase P protein component 4 family. As to quaternary structure, consists of a catalytic RNA component and at least 4-5 protein subunits. Zn(2+) serves as cofactor.

Its subcellular location is the cytoplasm. It catalyses the reaction Endonucleolytic cleavage of RNA, removing 5'-extranucleotides from tRNA precursor.. Its function is as follows. Part of ribonuclease P, a protein complex that generates mature tRNA molecules by cleaving their 5'-ends. The sequence is that of Ribonuclease P protein component 4 from Methanococcoides burtonii (strain DSM 6242 / NBRC 107633 / OCM 468 / ACE-M).